Here is a 185-residue protein sequence, read N- to C-terminus: Segregation and condensation protein B (185 aa).

Belongs to the ScpB family. As to quaternary structure, homodimer. Homodimerization may be required to stabilize the binding of ScpA to the Smc head domains. Component of a cohesin-like complex composed of ScpA, ScpB and the Smc homodimer, in which ScpA and ScpB bind to the head domain of Smc. The presence of the three proteins is required for the association of the complex with DNA.

The protein resides in the cytoplasm. Its function is as follows. Participates in chromosomal partition during cell division. May act via the formation of a condensin-like complex containing Smc and ScpA that pull DNA away from mid-cell into both cell halves. This is Segregation and condensation protein B from Carboxydothermus hydrogenoformans (strain ATCC BAA-161 / DSM 6008 / Z-2901).